A 376-amino-acid chain; its full sequence is Ribosomal RNA large subunit methyltransferase G (376 aa).

Belongs to the methyltransferase superfamily. RlmG family.

The protein localises to the cytoplasm. The enzyme catalyses guanosine(1835) in 23S rRNA + S-adenosyl-L-methionine = N(2)-methylguanosine(1835) in 23S rRNA + S-adenosyl-L-homocysteine + H(+). Functionally, specifically methylates the guanine in position 1835 (m2G1835) of 23S rRNA. The sequence is that of Ribosomal RNA large subunit methyltransferase G from Vibrio vulnificus (strain CMCP6).